A 229-amino-acid chain; its full sequence is Large ribosomal subunit protein uL1 (229 aa).

It belongs to the universal ribosomal protein uL1 family. In terms of assembly, part of the 50S ribosomal subunit.

In terms of biological role, binds directly to 23S rRNA. The L1 stalk is quite mobile in the ribosome, and is involved in E site tRNA release. Its function is as follows. Protein L1 is also a translational repressor protein, it controls the translation of the L11 operon by binding to its mRNA. This Flavobacterium johnsoniae (strain ATCC 17061 / DSM 2064 / JCM 8514 / BCRC 14874 / CCUG 350202 / NBRC 14942 / NCIMB 11054 / UW101) (Cytophaga johnsonae) protein is Large ribosomal subunit protein uL1.